The sequence spans 338 residues: DNA-directed RNA polymerase subunit alpha (338 aa).

Residues 1–234 (MIQKNWQELI…DQLQLFINFE (234 aa)) form an alpha N-terminal domain (alpha-NTD) region. The tract at residues 250–338 (FNKNLLRKVD…ELAKKLEEPY (89 aa)) is alpha C-terminal domain (alpha-CTD).

The protein belongs to the RNA polymerase alpha chain family. Homodimer. The RNAP catalytic core consists of 2 alpha, 1 beta, 1 beta' and 1 omega subunit. When a sigma factor is associated with the core the holoenzyme is formed, which can initiate transcription.

The enzyme catalyses RNA(n) + a ribonucleoside 5'-triphosphate = RNA(n+1) + diphosphate. Its function is as follows. DNA-dependent RNA polymerase catalyzes the transcription of DNA into RNA using the four ribonucleoside triphosphates as substrates. This chain is DNA-directed RNA polymerase subunit alpha, found in Paramagnetospirillum magneticum (strain ATCC 700264 / AMB-1) (Magnetospirillum magneticum).